The primary structure comprises 81 residues: Photosystem I iron-sulfur center (81 aa).

2 4Fe-4S ferredoxin-type domains span residues 2 to 31 (SHTVKIYDTCIGCTQCVRACPTDVLEMVPW) and 39 to 68 (VASSPRTEDCVGCKRCETACPTDFLSIRVY). Cysteine 11, cysteine 14, cysteine 17, cysteine 21, cysteine 48, cysteine 51, cysteine 54, and cysteine 58 together coordinate [4Fe-4S] cluster.

In terms of assembly, the cyanobacterial PSI reaction center is composed of one copy each of PsaA,B,C,D,E,F,I,J,K,L,M and X, and forms trimeric complexes. [4Fe-4S] cluster serves as cofactor.

The protein localises to the cellular thylakoid membrane. It catalyses the reaction reduced [plastocyanin] + hnu + oxidized [2Fe-2S]-[ferredoxin] = oxidized [plastocyanin] + reduced [2Fe-2S]-[ferredoxin]. Apoprotein for the two 4Fe-4S centers FA and FB of photosystem I (PSI); essential for photochemical activity. FB is the terminal electron acceptor of PSI, donating electrons to ferredoxin. The C-terminus interacts with PsaA/B/D and helps assemble the protein into the PSI complex. Required for binding of PsaD and PsaE to PSI. PSI is a plastocyanin/cytochrome c6-ferredoxin oxidoreductase, converting photonic excitation into a charge separation, which transfers an electron from the donor P700 chlorophyll pair to the spectroscopically characterized acceptors A0, A1, FX, FA and FB in turn. The chain is Photosystem I iron-sulfur center from Trichormus variabilis (strain ATCC 29413 / PCC 7937) (Anabaena variabilis).